Consider the following 415-residue polypeptide: Methylmalonic aciduria type A homolog, mitochondrial (415 aa).

The N-terminal 62 residues, 1 to 62 (MTISTLLLSP…LLSDGFRRTL (62 aa)), are a transit peptide targeting the mitochondrion. GTP-binding positions include 147 to 155 (GPPGAGKST), D289, and 325 to 327 (SAR).

It belongs to the SIMIBI class G3E GTPase family. ArgK/MeaB subfamily. As to quaternary structure, homodimer. Interacts with MMUT (the apoenzyme form); the interaction is GTP dependent.

It localises to the mitochondrion. The protein localises to the cytoplasm. The enzyme catalyses GTP + H2O = GDP + phosphate + H(+). Its activity is regulated as follows. GTPase activity is stimulated by MMUT. GTPase, binds and hydrolyzes GTP. Involved in intracellular vitamin B12 metabolism, mediates the transport of cobalamin (Cbl) into mitochondria for the final steps of adenosylcobalamin (AdoCbl) synthesis. Functions as a G-protein chaperone that assists AdoCbl cofactor delivery from MMAB to the methylmalonyl-CoA mutase (MMUT). Plays a dual role as both a protectase and a reactivase for MMUT. Protects MMUT from progressive inactivation by oxidation by decreasing the rate of the formation of the oxidized inactive cofactor hydroxocobalamin (OH2Cbl). Additionally acts a reactivase by promoting the replacement of OH2Cbl by the active cofactor AdoCbl, restoring the activity of MMUT in the presence and hydrolysis of GTP. The polypeptide is Methylmalonic aciduria type A homolog, mitochondrial (Mus musculus (Mouse)).